Consider the following 249-residue polypeptide: Aquaporin SIP2-1 (249 aa).

Transmembrane regions (helical) follow at residues 12–32 (PWLV…GALV) and 53–73 (VSLS…SGGA). An NPA 1 motif is present at residues 76–78 (NPL). Helical transmembrane passes span 104 to 124 (AQVI…PNVG), 133 to 155 (AHHG…VTLK), 176 to 196 (IHLL…AFAW), and 210 to 230 (LVYW…VTFF). Residues 189–191 (NPA) carry the NPA 2 motif.

It belongs to the MIP/aquaporin (TC 1.A.8) family. SIP (TC 1.A.8.10) subfamily.

The protein resides in the membrane. In terms of biological role, aquaporins facilitate the transport of water and small neutral solutes across cell membranes. The sequence is that of Aquaporin SIP2-1 (SIP2-1) from Zea mays (Maize).